Consider the following 468-residue polypeptide: MTLYRSLWKKGCMLLLSLVLSLTAFIGSPSNTASAAVADDIQASVMGPLAKINDWGSFKKQLQTLKNNGVYAITTDVWWGYVESAGDNQFDWSYYKTYADAVKEAGLKWVPIISTHKCGGNVGDDCNIPLPSWLSSKGSADEMQFKDESGYANNEALSPLWSGTGKQYDELYASFAQNFAGYKSIIPKIYLSGGPSGELRYPSYYPAAGWSYPGRGKFQAYTETAKNAFRTAMNDKYGSLDKINTAWGTKLTSLSQINPPTDGDGFYTNGGYNSAYGKDFLSWYQSVLEKHLGVIGAAAHKNFDSVFGVRIGAKISGLHWQMNNPAMPHSTEQAGGYYDYNRLIQKFKDADLDLTFTCLEMSDSGTAPNYSLPSTLVDTVSSIANAKGVRLNGENALQTGGSGFQKIEEKITKFGYHGFTLLRINNLVNNDGSPTGELSGFKQYIISKAKPDNNGGTGNKVTIYYKKG.

An N-terminal signal peptide occupies residues 1-36; the sequence is MTLYRSLWKKGCMLLLSLVLSLTAFIGSPSNTASAA. Substrate is bound at residue aspartate 76. 2 residues coordinate Ca(2+): glutamate 83 and aspartate 87. Substrate is bound by residues histidine 116 and aspartate 124. A disulfide bridge connects residues cysteine 118 and cysteine 126. Glutamate 170 serves as a coordination point for Ca(2+). Glutamate 198 acts as the Proton donor in catalysis. Residues lysine 314, histidine 319, and threonine 357 each coordinate substrate. The active-site Proton acceptor is glutamate 394. Substrate is bound by residues 395–396 and arginine 423; that span reads NA.

Belongs to the glycosyl hydrolase 14 family. Ca(2+) serves as cofactor.

The catalysed reaction is Hydrolysis of (1-&gt;4)-alpha-D-glucosidic linkages in polysaccharides so as to remove successive maltose units from the non-reducing ends of the chains.. This chain is Beta-amylase, found in Cytobacillus firmus (Bacillus firmus).